A 122-amino-acid polypeptide reads, in one-letter code: Large ribosomal subunit protein uL18 (122 aa).

The interval 1–24 (MSTLSRKQQTQKRHRRLRRHLSGT) is disordered. A compositionally biased stretch (basic residues) spans 9 to 21 (QTQKRHRRLRRHL).

It belongs to the universal ribosomal protein uL18 family. As to quaternary structure, part of the 50S ribosomal subunit; part of the 5S rRNA/L5/L18/L25 subcomplex. Contacts the 5S and 23S rRNAs.

Functionally, this is one of the proteins that bind and probably mediate the attachment of the 5S RNA into the large ribosomal subunit, where it forms part of the central protuberance. This chain is Large ribosomal subunit protein uL18, found in Synechococcus sp. (strain WH7803).